Here is a 159-residue protein sequence, read N- to C-terminus: Small ribosomal subunit protein uS9 (159 aa).

This sequence belongs to the universal ribosomal protein uS9 family.

This chain is Small ribosomal subunit protein uS9, found in Rickettsia massiliae (strain Mtu5).